The primary structure comprises 540 residues: Chaperonin GroEL 2 (540 aa).

ATP is bound by residues 30-33, Lys-51, 87-91, Gly-415, 480-482, and Asp-496; these read TLGP, DGTTT, and NAL.

The protein belongs to the chaperonin (HSP60) family. Forms a cylinder of 14 subunits composed of two heptameric rings stacked back-to-back. Interacts with the co-chaperonin GroES.

The protein localises to the cytoplasm. The enzyme catalyses ATP + H2O + a folded polypeptide = ADP + phosphate + an unfolded polypeptide.. Functionally, together with its co-chaperonin GroES, plays an essential role in assisting protein folding. The GroEL-GroES system forms a nano-cage that allows encapsulation of the non-native substrate proteins and provides a physical environment optimized to promote and accelerate protein folding. The sequence is that of Chaperonin GroEL 2 from Protochlamydia amoebophila (strain UWE25).